The primary structure comprises 353 residues: C-X-C chemokine receptor type 4 (353 aa).

Residues 1–22 form an important for chemokine binding and signaling region; it reads MEELHIYPSDNYTEEDLGSGDY. The Extracellular portion of the chain corresponds to 1–39; the sequence is MEELHIYPSDNYTEEDLGSGDYDSMKEPCFREENAHFNR. The residue at position 7 (Y7) is a Sulfotyrosine. A glycan (N-linked (GlcNAc...) asparagine) is linked at N11. The residue at position 12 (Y12) is a Sulfotyrosine. O-linked (Xyl...) (chondroitin sulfate) serine glycosylation is present at S19. Position 22 is a sulfotyrosine (Y22). 2 disulfides stabilise this stretch: C29-C275 and C110-C187. The helical transmembrane segment at 40 to 64 threads the bilayer; the sequence is IFLPTVYSIIFLTGIVGNGLVILVM. The Cytoplasmic portion of the chain corresponds to 65–78; it reads GYQKKLRSMTDKYR. Residues 79–100 traverse the membrane as a helical segment; sequence LHLSVADLLFVLTLPFWAVEAV. A chemokine binding region spans residues 95–98; the sequence is WAVE. Residues 101–111 are Extracellular-facing; the sequence is ANWYFGNFLCK. Residues 112–131 traverse the membrane as a helical segment; sequence AVHVIYTVNLYSSVLILAFI. The interval 114 to 118 is chemokine binding; the sequence is HVIYT. Over 132 to 155 the chain is Cytoplasmic; sequence SLDRYLAIVHATNSQRPRKLLAEK. Residues 134–136 carry the Important for signaling motif; that stretch reads DRY. The segment at 136–148 is involved in dimerization; when bound to chemokine; that stretch reads YLAIVHATNSQRP. The helical transmembrane segment at 156-175 threads the bilayer; sequence VVYVGVWIPALLLTIPDFIF. The Extracellular segment spans residues 176-196; sequence ANVREADDRYICDRFYPNDSW. Residues 187-191 are chemokine binding, important for signaling; the sequence is CDRFY. Positions 192 to 211 are involved in dimerization; it reads PNDSWLVVFQFQHIMVGLIL. A helical membrane pass occupies residues 197–217; that stretch reads LVVFQFQHIMVGLILPGIVIL. Residues 218-242 lie on the Cytoplasmic side of the membrane; sequence SCYCIIISKLSHSKGYQKRKALKTT. The helical transmembrane segment at 243 to 262 threads the bilayer; sequence VILILAFFACWLPYYIGISI. Topologically, residues 263-283 are extracellular; the sequence is DSFILLEIIKQGCEFEKTVHK. Residues 267 to 269 are involved in dimerization; that stretch reads LLE. The chain crosses the membrane as a helical span at residues 284 to 303; sequence WISITEALAFFHCCLNPILY. Over 304–353 the chain is Cytoplasmic; that stretch reads AFLGAKFKTSAQHALTSVSRGSSLKILSKGKRGGHSSVSTESESSSFHSS. Residues S320 and S322 each carry the phosphoserine modification. A phosphoserine; by PKC and GRK6 mark is found at S325 and S326. The disordered stretch occupies residues 330–353; sequence LSKGKRGGHSSVSTESESSSFHSS. Position 331 is a phosphoserine; by GRK6 (S331). K332 participates in a covalent cross-link: Glycyl lysine isopeptide (Lys-Gly) (interchain with G-Cter in ubiquitin). Over residues 338–353 the composition is skewed to low complexity; that stretch reads HSSVSTESESSSFHSS. Residue S340 is modified to Phosphoserine; by GRK6. Phosphoserine occurs at positions 349 and 352.

The protein belongs to the G-protein coupled receptor 1 family. In terms of assembly, monomer. Can form homodimers. Interacts with CD164. Interacts with ARRB2; the interaction is dependent on the C-terminal phosphorylation of CXCR4 and allows activation of MAPK1 and MAPK3. Interacts with ARR3; the interaction is dependent on the C-terminal phosphorylation of CXCR4 and modulates calcium mobilization. Interacts with RNF113A; the interaction, enhanced by CXCL12, promotes CXCR4 ubiquitination and subsequent degradation. Interacts (via the cytoplasmic C-terminal) with ITCH (via the WW domains I and II); the interaction, enhanced by CXCL12, promotes CXCR4 ubiquitination and leads to its degradation. Interacts with extracellular ubiquitin. Interacts with DBN1; this interaction is enhanced by antigenic stimulation. Following LPS binding, may form a complex with GDF5, HSP90AA1 and HSPA8. In terms of processing, phosphorylated on agonist stimulation. Rapidly phosphorylated on serine and threonine residues in the C-terminal. Phosphorylation at Ser-325 and Ser-326 leads to recruitment of ITCH, ubiquitination and protein degradation. Post-translationally, ubiquitinated after ligand binding, leading to its degradation. Ubiquitinated by ITCH at the cell membrane on agonist stimulation. The ubiquitin-dependent mechanism, endosomal sorting complex required for transport (ESCRT), then targets CXCR4 for lysosomal degradation. This process is dependent also on prior Ser-/Thr-phosphorylation in the C-terminal of CXCR4. Also binding of ARRB1 to STAM negatively regulates CXCR4 sorting to lysosomes though modulating ubiquitination of SFR5S. Sulfation is required for efficient binding of CXCL12/SDF-1alpha and promotes its dimerization. In terms of processing, O- and N-glycosylated. N-glycosylation can mask coreceptor function. The O-glycosylation chondroitin sulfate attachment does not affect interaction with CXCL12/SDF-1alpha nor its coreceptor activity.

The protein localises to the cell membrane. Its subcellular location is the cell junction. It is found in the early endosome. It localises to the late endosome. The protein resides in the lysosome. Its function is as follows. Receptor for the C-X-C chemokine CXCL12/SDF-1 that transduces a signal by increasing intracellular calcium ion levels and enhancing MAPK1/MAPK3 activation. Involved in the AKT signaling cascade. Plays a role in regulation of cell migration, e.g. during wound healing. Acts as a receptor for extracellular ubiquitin; leading to enhanced intracellular calcium ions and reduced cellular cAMP levels. Binds bacterial lipopolysaccharide (LPS) et mediates LPS-induced inflammatory response, including TNF secretion by monocytes. Involved in hematopoiesis and in cardiac ventricular septum formation. Also plays an essential role in vascularization of the gastrointestinal tract, probably by regulating vascular branching and/or remodeling processes in endothelial cells. Involved in cerebellar development. In the CNS, could mediate hippocampal-neuron survival. In Canis lupus familiaris (Dog), this protein is C-X-C chemokine receptor type 4 (CXCR4).